Consider the following 78-residue polypeptide: Beta-defensin 105 (78 aa).

A signal peptide spans 1-27 (MALIRKTFYFLFAMFFILVQLPSGCQA). Intrachain disulfides connect Cys43–Cys74, Cys53–Cys67, and Cys57–Cys73.

It belongs to the beta-defensin family. In terms of tissue distribution, specifically expressed in testis.

It localises to the secreted. In terms of biological role, has antibacterial activity. The chain is Beta-defensin 105 (DEFB105A) from Homo sapiens (Human).